The primary structure comprises 173 residues: Inorganic pyrophosphatase (173 aa).

Substrate is bound by residues lysine 26, arginine 40, and tyrosine 52. Residues aspartate 62, aspartate 67, and aspartate 99 each contribute to the Mg(2+) site. Residue tyrosine 138 coordinates substrate.

Belongs to the PPase family. Homohexamer. Mg(2+) serves as cofactor.

It is found in the cytoplasm. It carries out the reaction diphosphate + H2O = 2 phosphate + H(+). Catalyzes the hydrolysis of inorganic pyrophosphate (PPi) forming two phosphate ions. In Sulfolobus acidocaldarius (strain ATCC 33909 / DSM 639 / JCM 8929 / NBRC 15157 / NCIMB 11770), this protein is Inorganic pyrophosphatase.